Reading from the N-terminus, the 362-residue chain is Cobalt-precorrin-5B C(1)-methyltransferase (362 aa).

The protein belongs to the CbiD family.

It catalyses the reaction Co-precorrin-5B + S-adenosyl-L-methionine = Co-precorrin-6A + S-adenosyl-L-homocysteine. Its pathway is cofactor biosynthesis; adenosylcobalamin biosynthesis; cob(II)yrinate a,c-diamide from sirohydrochlorin (anaerobic route): step 6/10. Its function is as follows. Catalyzes the methylation of C-1 in cobalt-precorrin-5B to form cobalt-precorrin-6A. The protein is Cobalt-precorrin-5B C(1)-methyltransferase of Burkholderia multivorans (strain ATCC 17616 / 249).